A 276-amino-acid chain; its full sequence is Large ribosomal subunit protein uL2 (276 aa).

2 disordered regions span residues 38 to 59 (FQKS…GGHK) and 225 to 276 (VMNP…RHKR). Residues 39–49 (QKSGRNNNGHI) are compositionally biased toward polar residues. A compositionally biased stretch (basic residues) spans 50–59 (TTRHKGGGHK).

It belongs to the universal ribosomal protein uL2 family. As to quaternary structure, part of the 50S ribosomal subunit. Forms a bridge to the 30S subunit in the 70S ribosome.

One of the primary rRNA binding proteins. Required for association of the 30S and 50S subunits to form the 70S ribosome, for tRNA binding and peptide bond formation. It has been suggested to have peptidyltransferase activity; this is somewhat controversial. Makes several contacts with the 16S rRNA in the 70S ribosome. In Cupriavidus necator (strain ATCC 17699 / DSM 428 / KCTC 22496 / NCIMB 10442 / H16 / Stanier 337) (Ralstonia eutropha), this protein is Large ribosomal subunit protein uL2.